Reading from the N-terminus, the 438-residue chain is sn-glycerol-3-phosphate-binding periplasmic protein UgpB (438 aa).

The first 23 residues, 1–23 (MKPLRYTASALALGLALMANAQA), serve as a signal peptide directing secretion. Positions 65, 89, 144, 270, 307, 346, and 397 each coordinate sn-glycerol 3-phosphate.

Belongs to the bacterial solute-binding protein 1 family. The complex is composed of two ATP-binding proteins (UgpC), two transmembrane proteins (UgpA and UgpE) and a solute-binding protein (UgpB).

The protein localises to the periplasm. Its function is as follows. Part of the ABC transporter complex UgpBAEC involved in sn-glycerol-3-phosphate (G3P) import. Binds G3P. The polypeptide is sn-glycerol-3-phosphate-binding periplasmic protein UgpB (ugpB) (Escherichia coli O6:K15:H31 (strain 536 / UPEC)).